A 54-amino-acid polypeptide reads, in one-letter code: SEITRVPLHKGKSLRKALKEHGLLEBFDKVSNEPLADFLDSEYFGKIYIGTPPZ.

A propeptide spans 1 to 27 (SEITRVPLHKGKSLRKALKEHGLLEBF) (activation peptide).

It belongs to the peptidase A1 family. Monomer.

It catalyses the reaction Broad specificity similar to that of pepsin A. Clots milk by cleavage of a single 104-Ser-Phe-|-Met-Ala-107 bond in kappa-chain of casein.. Chymosin is synthesized in the mucosa of the stomach. The enzyme hydrolyzes casein to paracasein. The sequence is that of Chymosin (CYM) from Felis catus (Cat).